We begin with the raw amino-acid sequence, 433 residues long: N-lysine methyltransferase SMYD2 (433 aa).

Residues G7–I241 enclose the SET domain. K17–R19 contacts S-adenosyl-L-methionine. Zn(2+) is bound by residues C52, C55, C65, C68, C74, C78, H86, and C90. The segment at C52 to C90 adopts an MYND-type zinc-finger fold. Residues H137, N206–H207, and Y258–F260 contribute to the S-adenosyl-L-methionine site.

The protein belongs to the class V-like SAM-binding methyltransferase superfamily. In terms of assembly, interacts with RNA polymerase II and HELZ. Interacts with SIN3A and HDAC1. Interacts (via MYND-type zinc finger) with EPB41L3. Interacts (via SET domain) with p53/TP53. Interacts with RB1 and HSP90AA1.

It is found in the cytoplasm. The protein localises to the cytosol. It localises to the nucleus. It carries out the reaction L-lysyl(4)-[histone H3] + 3 S-adenosyl-L-methionine = N(6),N(6),N(6)-trimethyl-L-lysyl(4)-[histone H3] + 3 S-adenosyl-L-homocysteine + 3 H(+). The catalysed reaction is L-lysyl-[protein] + S-adenosyl-L-methionine = N(6)-methyl-L-lysyl-[protein] + S-adenosyl-L-homocysteine + H(+). In terms of biological role, protein-lysine N-methyltransferase that methylates both histones and non-histone proteins, including p53/TP53 and RB1. Specifically trimethylates histone H3 'Lys-4' (H3K4me3) in vivo. The activity requires interaction with HSP90alpha. Shows even higher methyltransferase activity on p53/TP53. Monomethylates 'Lys-370' of p53/TP53, leading to decreased DNA-binding activity and subsequent transcriptional regulation activity of p53/TP53. Monomethylates RB1 at 'Lys-860'. This is N-lysine methyltransferase SMYD2 (SMYD2) from Sus scrofa (Pig).